The sequence spans 383 residues: Non-structural maintenance of chromosomes element 4 homolog B (383 aa).

Basic and acidic residues predominate over residues 1-22 (MRNSVKWETELTGDRSRRREAD). Disordered stretches follow at residues 1-59 (MRNS…EQGI), 198-231 (MKQR…EKKS), and 355-383 (QGSV…NGGL). A compositionally biased stretch (basic residues) spans 201–212 (RKSRVGNRKRTK). Polar residues predominate over residues 355–372 (QGSVIQEETVVEDSSNME).

The protein belongs to the NSE4 family. As to quaternary structure, interacts with SMC5, SMC6A or SMC6B. The SMC5-SMC6 complex is composed of the SMC5 and SMC6 heterodimer attached via their hinge domain and from the non-SMC subunit NSE4A or NSE4B. In terms of tissue distribution, not expressed in seedlings, rosette leaves and floral buds.

It localises to the nucleus. In terms of biological role, component of the SMC5-SMC6 complex, that promotes sister chromatid alignment after DNA damage and facilitates double-stranded DNA breaks (DSBs) repair via homologous recombination between sister chromatids. The protein is Non-structural maintenance of chromosomes element 4 homolog B (NSE4B) of Arabidopsis thaliana (Mouse-ear cress).